Consider the following 644-residue polypeptide: Cell pattern formation-associated protein StuA (644 aa).

Low complexity predominate over residues 18-33 (ATAHAPASAAPSGISH). 2 disordered regions span residues 18–58 (ATAH…PGYP) and 86–120 (QLPAMSSSGPSPSLSGAQSYAPHSFDHTGQVAPPG). A compositionally biased stretch (polar residues) spans 38 to 47 (PQSSMMQPGQ). Over residues 87–104 (LPAMSSSGPSPSLSGAQS) the composition is skewed to low complexity. Residues 124 to 230 (RVTATLWEDE…HDIGALLYHP (107 aa)) form the HTH APSES-type domain. A DNA-binding region (H-T-H motif) is located at residues 158–179 (GTKLLNVAGMTRGRRDGILKSE). A disordered region spans residues 239–644 (GSAAMAAVDR…HTMTAQRARR (406 aa)). Residues 253-269 (SMQTQRYISGPTTSQPP) show a composition bias toward polar residues. Residues 315 to 328 (SASSIMGMSNSGSS) are compositionally biased toward low complexity. 3 stretches are compositionally biased toward polar residues: residues 334 to 357 (ANVQTPQGSQPLSIDTGLSNTRSV), 371 to 383 (QAISYGSNQSYDN), and 395 to 404 (PGQYNTQGQS). Basic and acidic residues predominate over residues 456–465 (EGDHEHDNEY). Over residues 509-524 (GSGRATPRTTTTSQTQ) the composition is skewed to low complexity. The segment covering 525–544 (WNSGYPTPQRQGPPSSNLYN) has biased composition (polar residues). The nuclear localization domain stretch occupies residues 584 to 612 (KRGRDDDDEDPYRPDSVQSDDMGGLKRRK). Positions 635–644 (HTMTAQRARR) are enriched in polar residues.

Belongs to the EFG1/PHD1/stuA family.

The protein localises to the nucleus. Transcription factor that regulates asexual reproduction. Binds the StuA-response elements (StRE) with the consensus sequence 5'-(A/T)CGCG(T/A)N(A/C)-3' at the promoters of target genes. Required for pathogenicity and positively regulates the synthesis of the mycotoxin alternariol. Acts as a positive regulator of Tox3 but is not required for the expression of ToxA. Also acts as a central regulator of carbon metabolism including glycolysis, the TCA cycle, and amino acid synthesis. This Phaeosphaeria nodorum (strain SN15 / ATCC MYA-4574 / FGSC 10173) (Glume blotch fungus) protein is Cell pattern formation-associated protein StuA.